The sequence spans 371 residues: tRNA-specific 2-thiouridylase MnmA (371 aa).

ATP is bound by residues 13–20 (GMSGGVDS) and Met-39. Positions 99 to 101 (NPD) are interaction with target base in tRNA. The Nucleophile role is filled by Cys-104. Cysteines 104 and 200 form a disulfide. Residue Gly-128 coordinates ATP. The segment at 150–152 (KDQ) is interaction with tRNA. Cys-200 functions as the Cysteine persulfide intermediate in the catalytic mechanism. Residues 308 to 309 (RY) form an interaction with tRNA region.

Belongs to the MnmA/TRMU family.

It localises to the cytoplasm. It catalyses the reaction S-sulfanyl-L-cysteinyl-[protein] + uridine(34) in tRNA + AH2 + ATP = 2-thiouridine(34) in tRNA + L-cysteinyl-[protein] + A + AMP + diphosphate + H(+). In terms of biological role, catalyzes the 2-thiolation of uridine at the wobble position (U34) of tRNA, leading to the formation of s(2)U34. The protein is tRNA-specific 2-thiouridylase MnmA of Bacillus anthracis.